Here is a 264-residue protein sequence, read N- to C-terminus: RNA-binding protein pos-1 (264 aa).

Positions 56–82 (QDKETQNSASQPTSEQSLANRDPCTVP) are disordered. The span at 61-74 (QNSASQPTSEQSLA) shows a compositional bias: polar residues. C3H1-type zinc fingers lie at residues 98 to 126 (AFKT…HGVH) and 141 to 169 (KYKT…HKIV). Zn(2+) is bound by residues Cys-104, Cys-113, Cys-119, His-123, Cys-147, Cys-156, Cys-162, and His-166.

In terms of assembly, monomer.

Its subcellular location is the cytoplasm. RNA-binding protein that coordinates cell fate specification and differentiation during early embryogenesis. Binds to a consensus pos-1 recognition element (PRE) consisting of the sequence 5'-UA(U 2-3)RGD(N 1-3)G-3', where R is any purine, D is A, G, or U, and N is any base. The PRE motif is found within the 3' untranslated region of many maternal transcripts required for early development. Binds to the 3' untranslated region (UTR) of Notch receptor homolog glp-1, thereby repressing glp-1 translation in the posterior blastomeres in the embryo. Binding to glp-1 3' UTR excludes cell fate regulator gld-1 binding to an overlapping binding site in the glp-1 3' UTR. Binds to the neg-1 3'UTR thereby opposing neg-1 expression and cytoplasmic polyadenylation of the neg-1 mRNA poly(A) tail promoted by gld-2 and gld-3. By inhibiting the cytoplasmic lengthening of neg-1 mRNA, restricts the accumulation of neg-1 protein and promotes endo-mesoderm development in anterior blastomeres. Essential for germline specification. The protein is RNA-binding protein pos-1 of Caenorhabditis elegans.